The following is a 902-amino-acid chain: HTH-type transcriptional regulator MalT (902 aa).

Position 39-46 (39-46) interacts with ATP; it reads SPAGYGKT. The 66-residue stretch at 832-897 folds into the HTH luxR-type domain; the sequence is ELVRTSPLTQ…EAIVTAENLL (66 aa). A DNA-binding region (H-T-H motif) is located at residues 856–875; the sequence is NEQIAQELDVAGTTIKTHIR.

Belongs to the MalT family. Monomer in solution. Oligomerizes to an active state in the presence of the positive effectors ATP and maltotriose.

Its activity is regulated as follows. Activated by ATP and maltotriose, which are both required for DNA binding. Positively regulates the transcription of the maltose regulon whose gene products are responsible for uptake and catabolism of malto-oligosaccharides. Specifically binds to the promoter region of its target genes, recognizing a short DNA motif called the MalT box. This chain is HTH-type transcriptional regulator MalT, found in Vibrio parahaemolyticus serotype O3:K6 (strain RIMD 2210633).